Here is a 214-residue protein sequence, read N- to C-terminus: Pyridoxine/pyridoxamine 5'-phosphate oxidase (214 aa).

Residues 8 to 11 (RKSY) and Lys67 contribute to the substrate site. FMN contacts are provided by residues 62–67 (RVVLLK), 77–78 (YT), Lys84, and Gln106. Residues Tyr124, Arg128, and Ser132 each contribute to the substrate site. Residues 141-142 (QS) and Trp186 contribute to the FMN site. 192 to 194 (RLH) is a binding site for substrate. Residue Arg196 coordinates FMN.

Belongs to the pyridoxamine 5'-phosphate oxidase family. In terms of assembly, homodimer. The cofactor is FMN.

It catalyses the reaction pyridoxamine 5'-phosphate + O2 + H2O = pyridoxal 5'-phosphate + H2O2 + NH4(+). The enzyme catalyses pyridoxine 5'-phosphate + O2 = pyridoxal 5'-phosphate + H2O2. The protein operates within cofactor metabolism; pyridoxal 5'-phosphate salvage; pyridoxal 5'-phosphate from pyridoxamine 5'-phosphate: step 1/1. It functions in the pathway cofactor metabolism; pyridoxal 5'-phosphate salvage; pyridoxal 5'-phosphate from pyridoxine 5'-phosphate: step 1/1. In terms of biological role, catalyzes the oxidation of either pyridoxine 5'-phosphate (PNP) or pyridoxamine 5'-phosphate (PMP) into pyridoxal 5'-phosphate (PLP). In Flavobacterium psychrophilum (strain ATCC 49511 / DSM 21280 / CIP 103535 / JIP02/86), this protein is Pyridoxine/pyridoxamine 5'-phosphate oxidase.